The primary structure comprises 871 residues: Translation initiation factor IF-2 (871 aa).

The disordered stretch occupies residues 1–242; that stretch reads MVDTKNPGDK…PAAKPAPAKQ (242 aa). The span at 68-91 shows a compositional bias: low complexity; it reads PASARTPAAKAPPARAATPAAPRA. The span at 115-174 shows a compositional bias: basic and acidic residues; sequence AKVRAEEERRIAEAEAARRNSKEGIEQAEREAAEARRKAEEERHRQEEEAKRKAEIEAKR. 2 stretches are compositionally biased toward low complexity: residues 182-206 and 225-241; these read KPAPAKTTTTTTRAAPPARPAAVAA and ARPVIAPKPAAKPAPAK. The 172-residue stretch at 367 to 538 folds into the tr-type G domain; it reads PRSPVVTVMG…SLQADLLDLK (172 aa). A G1 region spans residues 376–383; it reads GHVDHGKT. 376 to 383 contributes to the GTP binding site; that stretch reads GHVDHGKT. Residues 401-405 form a G2 region; sequence GITQH. Residues 424 to 427 are G3; it reads DTPG. Residues 424–428 and 478–481 contribute to the GTP site; these read DTPGH and NKID. Positions 478-481 are G4; the sequence is NKID. A G5 region spans residues 514-516; sequence SAK.

It belongs to the TRAFAC class translation factor GTPase superfamily. Classic translation factor GTPase family. IF-2 subfamily.

It localises to the cytoplasm. One of the essential components for the initiation of protein synthesis. Protects formylmethionyl-tRNA from spontaneous hydrolysis and promotes its binding to the 30S ribosomal subunits. Also involved in the hydrolysis of GTP during the formation of the 70S ribosomal complex. This Nitrobacter winogradskyi (strain ATCC 25391 / DSM 10237 / CIP 104748 / NCIMB 11846 / Nb-255) protein is Translation initiation factor IF-2.